A 34-amino-acid polypeptide reads, in one-letter code: Phospholipase A2 (34 aa).

His-18 is a catalytic residue. Asp-19 contributes to the Ca(2+) binding site.

The protein belongs to the phospholipase A2 family. Group I subfamily. D49 sub-subfamily. Ca(2+) is required as a cofactor. Contains 7 disulfide bonds. In terms of tissue distribution, expressed by the venom gland.

Its subcellular location is the secreted. The catalysed reaction is a 1,2-diacyl-sn-glycero-3-phosphocholine + H2O = a 1-acyl-sn-glycero-3-phosphocholine + a fatty acid + H(+). Snake venom phospholipase A2 (PLA2) that strongly inhibits platelet aggregation and has a strong anticoagulant activity. PLA2 catalyzes the calcium-dependent hydrolysis of the 2-acyl groups in 3-sn-phosphoglycerides. The polypeptide is Phospholipase A2 (Pseudechis papuanus (Papuan black snake)).